Here is a 561-residue protein sequence, read N- to C-terminus: Glutamine--tRNA ligase (561 aa).

Residues 34-44 (PEPNGYLHIGH) carry the 'HIGH' region motif. ATP is bound by residues 35-37 (EPN) and 41-47 (HIGHAKS). Positions 67 and 212 each coordinate L-glutamine. ATP is bound by residues T231, 261–262 (RL), and 269–271 (MSK). Residues 268 to 272 (VMSKR) carry the 'KMSKS' region motif.

This sequence belongs to the class-I aminoacyl-tRNA synthetase family. Monomer.

It is found in the cytoplasm. The catalysed reaction is tRNA(Gln) + L-glutamine + ATP = L-glutaminyl-tRNA(Gln) + AMP + diphosphate. The protein is Glutamine--tRNA ligase of Idiomarina loihiensis (strain ATCC BAA-735 / DSM 15497 / L2-TR).